Consider the following 378-residue polypeptide: UPF0754 membrane protein BC_0879 (378 aa).

A helical membrane pass occupies residues 357–377 (YLGALLGGMIGLVQGLLLLFL).

Belongs to the UPF0754 family.

It localises to the cell membrane. The protein is UPF0754 membrane protein BC_0879 of Bacillus cereus (strain ATCC 14579 / DSM 31 / CCUG 7414 / JCM 2152 / NBRC 15305 / NCIMB 9373 / NCTC 2599 / NRRL B-3711).